Consider the following 408-residue polypeptide: Broad specificity amino-acid racemase (408 aa).

The first 21 residues, 1–21 (MHKKTLLATLILGLLAGQAVA), serve as a signal peptide directing secretion. Cysteines 70 and 96 form a disulfide. Lys74 functions as the Proton acceptor in the catalytic mechanism. At Lys74 the chain carries N6-(pyridoxal phosphate)lysine. Arg173 provides a ligand contact to substrate. The active-site Proton acceptor is Tyr300. Met348 lines the substrate pocket.

It belongs to the alanine racemase family. Bsr subfamily. As to quaternary structure, homodimer. The cofactor is pyridoxal 5'-phosphate.

It localises to the periplasm. The enzyme catalyses an L-alpha-amino acid = a D-alpha-amino acid. It carries out the reaction L-lysine = D-lysine. The catalysed reaction is L-arginine = D-arginine. It catalyses the reaction L-alanine = D-alanine. The enzyme catalyses L-serine = D-serine. It carries out the reaction L-methionine = D-methionine. The catalysed reaction is L-leucine = D-leucine. It catalyses the reaction L-cysteine = D-cysteine. The enzyme catalyses L-glutamine = D-glutamine. It carries out the reaction L-asparagine = D-asparagine. The catalysed reaction is L-histidine = D-histidine. In terms of biological role, amino-acid racemase able to utilize a broad range of substrates. Reversibly racemizes ten of the 19 natural chiral amino acids known, including both non-beta-branched aliphatic amino acids (Ala, Leu, Met, Ser, Cys, Gln and Asn) and positively charged amino acids (His, Lys and Arg). Is not active on negatively charged (Glu and Asp) or aromatic (Tyr, Trp and Phe) amino acids and displays minimal activity towards beta-branched aliphatic (Ile, Val and Thr) substrates. Enables bacteria to produce and release extracellular non-canonical D-amino acids (NCDAAs) that regulate diverse cellular processes. The sequence is that of Broad specificity amino-acid racemase from Aeromonas hydrophila subsp. hydrophila (strain ATCC 7966 / DSM 30187 / BCRC 13018 / CCUG 14551 / JCM 1027 / KCTC 2358 / NCIMB 9240 / NCTC 8049).